We begin with the raw amino-acid sequence, 272 residues long: Imidazole glycerol phosphate synthase subunit HisF (272 aa).

Active-site residues include Asp11 and Asp130.

The protein belongs to the HisA/HisF family. Heterodimer of HisH and HisF.

The protein localises to the cytoplasm. The catalysed reaction is 5-[(5-phospho-1-deoxy-D-ribulos-1-ylimino)methylamino]-1-(5-phospho-beta-D-ribosyl)imidazole-4-carboxamide + L-glutamine = D-erythro-1-(imidazol-4-yl)glycerol 3-phosphate + 5-amino-1-(5-phospho-beta-D-ribosyl)imidazole-4-carboxamide + L-glutamate + H(+). It functions in the pathway amino-acid biosynthesis; L-histidine biosynthesis; L-histidine from 5-phospho-alpha-D-ribose 1-diphosphate: step 5/9. In terms of biological role, IGPS catalyzes the conversion of PRFAR and glutamine to IGP, AICAR and glutamate. The HisF subunit catalyzes the cyclization activity that produces IGP and AICAR from PRFAR using the ammonia provided by the HisH subunit. The chain is Imidazole glycerol phosphate synthase subunit HisF from Methanococcus vannielii (strain ATCC 35089 / DSM 1224 / JCM 13029 / OCM 148 / SB).